The sequence spans 162 residues: Allophycocyanin beta chain (162 aa).

Residue Asn72 is modified to N4-methylasparagine. (2R,3E)-phycocyanobilin is bound at residue Cys82.

The protein belongs to the phycobiliprotein family. In terms of assembly, heterodimer of an alpha and a beta chain. Post-translationally, contains one covalently linked phycocyanobilin chromophore.

It localises to the cellular thylakoid membrane. Light-harvesting photosynthetic bile pigment-protein from the phycobiliprotein complex. Allophycocyanin has a maximum absorption at approximately 650 nanometers. The sequence is that of Allophycocyanin beta chain from Microchaete diplosiphon (Fremyella diplosiphon).